The sequence spans 544 residues: Apolipoprotein N-acyltransferase 1 (544 aa).

6 consecutive transmembrane segments (helical) span residues 30–50 (LNLN…FLLL), 57–79 (FSFL…WIIF), 91–111 (KYCI…SYFS), 115–135 (FIFQ…GFLG), 157–177 (IFGV…SASF), and 197–217 (PMMI…FTKI). A CN hydrolase domain is found at 225–501 (ARIALVQPNR…KDILVADVTV (277 aa)). The active-site Proton acceptor is the Glu272. Residue Lys360 is part of the active site. Residue Cys412 is the Nucleophile of the active site. A helical transmembrane segment spans residues 514-534 (GDFFGVLCTIVLILNLCFIII).

It belongs to the CN hydrolase family. Apolipoprotein N-acyltransferase subfamily.

The protein localises to the cell inner membrane. It catalyses the reaction N-terminal S-1,2-diacyl-sn-glyceryl-L-cysteinyl-[lipoprotein] + a glycerophospholipid = N-acyl-S-1,2-diacyl-sn-glyceryl-L-cysteinyl-[lipoprotein] + a 2-acyl-sn-glycero-3-phospholipid + H(+). Its pathway is protein modification; lipoprotein biosynthesis (N-acyl transfer). Catalyzes the phospholipid dependent N-acylation of the N-terminal cysteine of apolipoprotein, the last step in lipoprotein maturation. The sequence is that of Apolipoprotein N-acyltransferase 1 from Treponema denticola (strain ATCC 35405 / DSM 14222 / CIP 103919 / JCM 8153 / KCTC 15104).